Here is a 129-residue protein sequence, read N- to C-terminus: Small ribosomal subunit protein uS11 (129 aa).

This sequence belongs to the universal ribosomal protein uS11 family. In terms of assembly, part of the 30S ribosomal subunit. Interacts with proteins S7 and S18. Binds to IF-3.

In terms of biological role, located on the platform of the 30S subunit, it bridges several disparate RNA helices of the 16S rRNA. Forms part of the Shine-Dalgarno cleft in the 70S ribosome. This Xanthobacter autotrophicus (strain ATCC BAA-1158 / Py2) protein is Small ribosomal subunit protein uS11.